A 200-amino-acid polypeptide reads, in one-letter code: Methylthioribulose-1-phosphate dehydratase-like protein (200 aa).

It belongs to the aldolase class II family. MtnB subfamily.

The sequence is that of Methylthioribulose-1-phosphate dehydratase-like protein from Schizosaccharomyces pombe (strain 972 / ATCC 24843) (Fission yeast).